Consider the following 92-residue polypeptide: Small ribosomal subunit protein uS19 (92 aa).

The protein belongs to the universal ribosomal protein uS19 family.

Its function is as follows. Protein S19 forms a complex with S13 that binds strongly to the 16S ribosomal RNA. The sequence is that of Small ribosomal subunit protein uS19 from Trichormus variabilis (strain ATCC 29413 / PCC 7937) (Anabaena variabilis).